A 270-amino-acid polypeptide reads, in one-letter code: tRNA pseudouridine synthase A (270 aa).

The active-site Nucleophile is D60. Residues 107-111 (FHARF) form an RNA binding region. Residue Y118 coordinates substrate. Positions 168 to 172 (QCQSR) are interaction with tRNA.

This sequence belongs to the tRNA pseudouridine synthase TruA family. As to quaternary structure, homodimer.

It carries out the reaction uridine(38/39/40) in tRNA = pseudouridine(38/39/40) in tRNA. Functionally, formation of pseudouridine at positions 38, 39 and 40 in the anticodon stem and loop of transfer RNAs. This is tRNA pseudouridine synthase A from Shigella boydii serotype 4 (strain Sb227).